Reading from the N-terminus, the 827-residue chain is Disintegrin and metalloproteinase domain-containing protein 17 (827 aa).

A signal peptide spans 1–17 (MRQRLLFLTTLVPFVLA). A propeptide spanning residues 18 to 214 (PRPPEEPGSG…SEEFVRRVKR (197 aa)) is cleaved from the precursor. An N-linked (GlcNAc...) asparagine glycan is attached at asparagine 157. The short motif at 182 to 189 (KVCGYLNA) is the Cysteine switch element. Cysteine 184 is a binding site for Zn(2+). Topologically, residues 215 to 671 (RAEPNPLKNT…NTFGKFLADN (457 aa)) are extracellular. Residues 223–474 (NTCKLLVVAD…KAQECFQERS (252 aa)) enclose the Peptidase M12B domain. 3 cysteine pairs are disulfide-bonded: cysteine 225–cysteine 333, cysteine 365–cysteine 469, and cysteine 423–cysteine 453. An N-linked (GlcNAc...) asparagine glycan is attached at asparagine 264. Histidine 405 provides a ligand contact to Zn(2+). Glutamate 406 is a catalytic residue. The Zn(2+) site is built by histidine 409 and histidine 415. Asparagine 452, asparagine 498, asparagine 539, and asparagine 551 each carry an N-linked (GlcNAc...) asparagine glycan. In terms of domain architecture, Disintegrin spans 475–563 (NKVCGNSRVD…ECPPPGDAED (89 aa)). 4 disulfide bridges follow: cysteine 534–cysteine 555, cysteine 573–cysteine 582, cysteine 578–cysteine 591, and cysteine 593–cysteine 600. A crambin-like region spans residues 603–671 (CCRNLSGPCV…NTFGKFLADN (69 aa)). An N-linked (GlcNAc...) asparagine glycan is attached at asparagine 606. Residues 672–692 (IVGSVLVFSLIFWIPFSILVH) form a helical membrane-spanning segment. Residues 693–827 (CVDKKLDKQY…SRVDSKETEC (135 aa)) are Cytoplasmic-facing. The SH3-binding motif lies at 731 to 738 (PAPQTPGR). Threonine 735 is subject to Phosphothreonine; by MAPK14. Threonine 764 bears the Phosphothreonine mark. The interval 766 to 827 (QEDPSTDSHV…SRVDSKETEC (62 aa)) is disordered. At serine 770 the chain carries Phosphoserine. Composition is skewed to basic and acidic residues over residues 771 to 784 (TDSH…EKDP), 794 to 810 (SFED…EKAA), and 818 to 827 (SRVDSKETEC). 2 positions are modified to phosphoserine: serine 794 and serine 822.

In terms of assembly, interacts with MAD2L1, MAPK14 and MUC1. Interacts with iRhom1/RHBDF1 and iRhom2/RHBDF2. Interacts with FRMD8 via its interaction with iRhom1/RHBDF1 and iRhom2/RHBDF2. Interacts with TSPAN8. Zn(2+) serves as cofactor. Post-translationally, the precursor is cleaved by a furin endopeptidase. In terms of processing, phosphorylated. Stimulation by growth factor or phorbol 12-myristate 13-acetate induces phosphorylation of Ser-822 but decreases phosphorylation of Ser-794. Phosphorylation at Thr-735 by MAPK14 is required for ADAM17-mediated ectodomain shedding.

It is found in the membrane. It carries out the reaction Narrow endopeptidase specificity. Cleaves Pro-Leu-Ala-Gln-Ala-|-Val-Arg-Ser-Ser-Ser in the membrane-bound, 26-kDa form of tumor necrosis factor alpha (TNFalpha). Similarly cleaves other membrane-anchored, cell-surface proteins to 'shed' the extracellular domains.. In terms of biological role, transmembrane metalloprotease which mediates the ectodomain shedding of a myriad of transmembrane proteins including adhesion proteins, growth factor precursors and cytokines important for inflammation and immunity. Cleaves the membrane-bound precursor of TNF-alpha to its mature soluble form. Responsible for the proteolytical release of soluble JAM3 from endothelial cells surface. Responsible for the proteolytic release of several other cell-surface proteins, including p75 TNF-receptor, interleukin 1 receptor type II, p55 TNF-receptor, transforming growth factor-alpha, L-selectin, growth hormone receptor, MUC1 and the amyloid precursor protein. Acts as an activator of Notch pathway by mediating cleavage of Notch, generating the membrane-associated intermediate fragment called Notch extracellular truncation (NEXT). Plays a role in the proteolytic processing of ACE2. Plays a role in hemostasis through shedding of GP1BA, the platelet glycoprotein Ib alpha chain. Mediates the proteolytic cleavage of LAG3, leading to release the secreted form of LAG3. Mediates the proteolytic cleavage of IL6R, leading to the release of secreted form of IL6R. Mediates the proteolytic cleavage and shedding of FCGR3A upon NK cell stimulation, a mechanism that allows for increased NK cell motility and detachment from opsonized target cells. Cleaves TREM2, resulting in shedding of the TREM2 ectodomain. The protein is Disintegrin and metalloproteinase domain-containing protein 17 (Adam17) of Rattus norvegicus (Rat).